The sequence spans 558 residues: Urocanate hydratase (558 aa).

NAD(+)-binding positions include 54 to 55 (GG), Q132, 178 to 180 (GMG), E198, 244 to 245 (NA), 265 to 269 (QTSAH), 275 to 276 (YL), and Y324. C412 is a catalytic residue. G494 provides a ligand contact to NAD(+).

Belongs to the urocanase family. NAD(+) is required as a cofactor.

It is found in the cytoplasm. It catalyses the reaction 4-imidazolone-5-propanoate = trans-urocanate + H2O. The protein operates within amino-acid degradation; L-histidine degradation into L-glutamate; N-formimidoyl-L-glutamate from L-histidine: step 2/3. Its function is as follows. Catalyzes the conversion of urocanate to 4-imidazolone-5-propionate. This Acinetobacter baumannii (strain AB307-0294) protein is Urocanate hydratase.